Consider the following 118-residue polypeptide: MARIAGVNIPDHKHVVIALTAIYGIGKTTSLKLCKTVDIDPSVKVSQLSDAQLESLRTEIAKITVEGDLRRVVTMNIKRLMDLGCYRGLRHRRGLPLRGQRTKTNARTRKGRRKGTSS.

The interval 94–118 (GLPLRGQRTKTNARTRKGRRKGTSS) is disordered.

It belongs to the universal ribosomal protein uS13 family. In terms of assembly, part of the 30S ribosomal subunit. Forms a loose heterodimer with protein S19. Forms two bridges to the 50S subunit in the 70S ribosome.

Functionally, located at the top of the head of the 30S subunit, it contacts several helices of the 16S rRNA. In the 70S ribosome it contacts the 23S rRNA (bridge B1a) and protein L5 of the 50S subunit (bridge B1b), connecting the 2 subunits; these bridges are implicated in subunit movement. Contacts the tRNAs in the A and P-sites. This is Small ribosomal subunit protein uS13 from Legionella pneumophila (strain Paris).